Consider the following 111-residue polypeptide: MKILSLILVILVLVVSTESAASNNIFSSIFSFGKKKPTSTPTPSYSKASASTSRCGVQASQCSAYECCNFDQTCLRNRCFPRLSNCPVTRDQCGNACCKTSEQCRNGKCSR.

This is an uncharacterized protein from Caenorhabditis elegans.